The chain runs to 376 residues: Glucose-1-phosphate adenylyltransferase (376 aa).

Alpha-D-glucose 1-phosphate-binding positions include tyrosine 101, glycine 166, 181-182 (EK), and serine 192.

It belongs to the bacterial/plant glucose-1-phosphate adenylyltransferase family. As to quaternary structure, homotetramer.

It carries out the reaction alpha-D-glucose 1-phosphate + ATP + H(+) = ADP-alpha-D-glucose + diphosphate. Its pathway is glycan biosynthesis; glycogen biosynthesis. Functionally, involved in the biosynthesis of ADP-glucose, a building block required for the elongation reactions to produce glycogen. Catalyzes the reaction between ATP and alpha-D-glucose 1-phosphate (G1P) to produce pyrophosphate and ADP-Glc. The chain is Glucose-1-phosphate adenylyltransferase from Bacillus cereus (strain Q1).